We begin with the raw amino-acid sequence, 64 residues long: Large ribosomal subunit protein bL35 (64 aa).

Basic residues-rich tracts occupy residues 1–26 (MPKM…KRSK) and 33–44 (LTKKSPKRKRKL). Positions 1 to 44 (MPKMKTHRGAAKRFKKTGTGKIKRSKAYTSHILTKKSPKRKRKL) are disordered.

The protein belongs to the bacterial ribosomal protein bL35 family.

This Alkaliphilus oremlandii (strain OhILAs) (Clostridium oremlandii (strain OhILAs)) protein is Large ribosomal subunit protein bL35.